Reading from the N-terminus, the 338-residue chain is Lipoate-protein ligase A (338 aa).

The BPL/LPL catalytic domain occupies 29-216 (DPNQRVLFLW…AFFSHYGERV (188 aa)). ATP-binding positions include Arg71, 76-79 (GAVF), and Lys134. Lys134 is a binding site for (R)-lipoate.

The protein belongs to the LplA family. In terms of assembly, monomer.

It localises to the cytoplasm. The catalysed reaction is L-lysyl-[lipoyl-carrier protein] + (R)-lipoate + ATP = N(6)-[(R)-lipoyl]-L-lysyl-[lipoyl-carrier protein] + AMP + diphosphate + H(+). It participates in protein modification; protein lipoylation via exogenous pathway; protein N(6)-(lipoyl)lysine from lipoate: step 1/2. The protein operates within protein modification; protein lipoylation via exogenous pathway; protein N(6)-(lipoyl)lysine from lipoate: step 2/2. Catalyzes both the ATP-dependent activation of exogenously supplied lipoate to lipoyl-AMP and the transfer of the activated lipoyl onto the lipoyl domains of lipoate-dependent enzymes. This chain is Lipoate-protein ligase A, found in Aeromonas hydrophila subsp. hydrophila (strain ATCC 7966 / DSM 30187 / BCRC 13018 / CCUG 14551 / JCM 1027 / KCTC 2358 / NCIMB 9240 / NCTC 8049).